The following is a 309-amino-acid chain: Porphobilinogen deaminase (309 aa).

Residue Cys243 is modified to S-(dipyrrolylmethanemethyl)cysteine.

This sequence belongs to the HMBS family. Monomer. The cofactor is dipyrromethane.

The enzyme catalyses 4 porphobilinogen + H2O = hydroxymethylbilane + 4 NH4(+). It participates in porphyrin-containing compound metabolism; protoporphyrin-IX biosynthesis; coproporphyrinogen-III from 5-aminolevulinate: step 2/4. Its function is as follows. Tetrapolymerization of the monopyrrole PBG into the hydroxymethylbilane pre-uroporphyrinogen in several discrete steps. The chain is Porphobilinogen deaminase from Deinococcus geothermalis (strain DSM 11300 / CIP 105573 / AG-3a).